The sequence spans 209 residues: FMN-dependent NADH:quinone oxidoreductase (209 aa).

FMN-binding positions include serine 9 and 15-17 (SNS).

This sequence belongs to the azoreductase type 1 family. In terms of assembly, homodimer. The cofactor is FMN.

The enzyme catalyses 2 a quinone + NADH + H(+) = 2 a 1,4-benzosemiquinone + NAD(+). It carries out the reaction N,N-dimethyl-1,4-phenylenediamine + anthranilate + 2 NAD(+) = 2-(4-dimethylaminophenyl)diazenylbenzoate + 2 NADH + 2 H(+). In terms of biological role, quinone reductase that provides resistance to thiol-specific stress caused by electrophilic quinones. Also exhibits azoreductase activity. Catalyzes the reductive cleavage of the azo bond in aromatic azo compounds to the corresponding amines. The chain is FMN-dependent NADH:quinone oxidoreductase from Bordetella parapertussis (strain 12822 / ATCC BAA-587 / NCTC 13253).